A 488-amino-acid polypeptide reads, in one-letter code: Long chain base biosynthesis protein 2a (488 aa).

A helical transmembrane segment spans residues 4 to 24 (LPYTTALTTLFSYGLLFAFGQ). Position 311 is an N6-(pyridoxal phosphate)lysine (Lys311).

The protein belongs to the class-II pyridoxal-phosphate-dependent aminotransferase family. In terms of assembly, heterodimer with LCB1. Component of the serine palmitoyltransferase (SPT) complex, composed of LCB1 and LCB2. Pyridoxal 5'-phosphate is required as a cofactor.

It is found in the endoplasmic reticulum membrane. It catalyses the reaction L-serine + hexadecanoyl-CoA + H(+) = 3-oxosphinganine + CO2 + CoA. Its pathway is lipid metabolism; sphingolipid metabolism. In terms of biological role, serine palmitoyltransferase (SPT). The heterodimer formed with LCB1 constitutes the catalytic core. This is Long chain base biosynthesis protein 2a from Oryza sativa subsp. japonica (Rice).